Reading from the N-terminus, the 371-residue chain is tRNA-specific 2-thiouridylase MnmA (371 aa).

ATP contacts are provided by residues 13-20 and Met39; that span reads GMSGGVDS. The interval 99–101 is interaction with target base in tRNA; that stretch reads NPD. Cys104 (nucleophile) is an active-site residue. Cysteines 104 and 200 form a disulfide. Gly128 contacts ATP. The interaction with tRNA stretch occupies residues 150–152; the sequence is KDQ. Cys200 serves as the catalytic Cysteine persulfide intermediate. Positions 309–310 are interaction with tRNA; that stretch reads RY.

This sequence belongs to the MnmA/TRMU family.

Its subcellular location is the cytoplasm. The enzyme catalyses S-sulfanyl-L-cysteinyl-[protein] + uridine(34) in tRNA + AH2 + ATP = 2-thiouridine(34) in tRNA + L-cysteinyl-[protein] + A + AMP + diphosphate + H(+). Catalyzes the 2-thiolation of uridine at the wobble position (U34) of tRNA, leading to the formation of s(2)U34. The sequence is that of tRNA-specific 2-thiouridylase MnmA from Bacillus subtilis (strain 168).